A 364-amino-acid polypeptide reads, in one-letter code: Phosphoserine aminotransferase (364 aa).

Arg41 lines the L-glutamate pocket. Residues 75–76 (AS), Trp100, Thr155, Asp175, and Gln198 each bind pyridoxal 5'-phosphate. The residue at position 199 (Lys199) is an N6-(pyridoxal phosphate)lysine. 239 to 240 (NT) is a pyridoxal 5'-phosphate binding site.

The protein belongs to the class-V pyridoxal-phosphate-dependent aminotransferase family. SerC subfamily. As to quaternary structure, homodimer. It depends on pyridoxal 5'-phosphate as a cofactor.

The protein resides in the cytoplasm. The catalysed reaction is O-phospho-L-serine + 2-oxoglutarate = 3-phosphooxypyruvate + L-glutamate. The enzyme catalyses 4-(phosphooxy)-L-threonine + 2-oxoglutarate = (R)-3-hydroxy-2-oxo-4-phosphooxybutanoate + L-glutamate. It functions in the pathway amino-acid biosynthesis; L-serine biosynthesis; L-serine from 3-phospho-D-glycerate: step 2/3. Catalyzes the reversible conversion of 3-phosphohydroxypyruvate to phosphoserine and of 3-hydroxy-2-oxo-4-phosphonooxybutanoate to phosphohydroxythreonine. In Streptococcus thermophilus (strain CNRZ 1066), this protein is Phosphoserine aminotransferase.